A 254-amino-acid chain; its full sequence is Ribosomal RNA small subunit methyltransferase J (254 aa).

S-adenosyl-L-methionine is bound by residues 106-107 and D177; that span reads RD.

The protein belongs to the methyltransferase superfamily. RsmJ family.

It is found in the cytoplasm. The catalysed reaction is guanosine(1516) in 16S rRNA + S-adenosyl-L-methionine = N(2)-methylguanosine(1516) in 16S rRNA + S-adenosyl-L-homocysteine + H(+). Specifically methylates the guanosine in position 1516 of 16S rRNA. The chain is Ribosomal RNA small subunit methyltransferase J from Nitrosococcus oceani (strain ATCC 19707 / BCRC 17464 / JCM 30415 / NCIMB 11848 / C-107).